The sequence spans 642 residues: Threonine--tRNA ligase (642 aa).

The TGS domain maps to 1–61; the sequence is MPVITLPDGS…ENDAQLSIIT (61 aa). The catalytic stretch occupies residues 243–534; sequence DHRKIGKQLD…LTEEFAGFFP (292 aa). Lys-286 carries the post-translational modification N6-acetyllysine. The Zn(2+) site is built by Cys-334, His-385, and His-511.

Belongs to the class-II aminoacyl-tRNA synthetase family. In terms of assembly, homodimer. It depends on Zn(2+) as a cofactor.

The protein resides in the cytoplasm. It carries out the reaction tRNA(Thr) + L-threonine + ATP = L-threonyl-tRNA(Thr) + AMP + diphosphate + H(+). Its function is as follows. Catalyzes the attachment of threonine to tRNA(Thr) in a two-step reaction: L-threonine is first activated by ATP to form Thr-AMP and then transferred to the acceptor end of tRNA(Thr). Also edits incorrectly charged L-seryl-tRNA(Thr). The sequence is that of Threonine--tRNA ligase from Shigella flexneri serotype 5b (strain 8401).